The following is a 169-amino-acid chain: MNNKTNWVIIGRFGRPHGIKGFVTVHSFTDPADNILRYNDWHVFLNKQWQPLKLLTIEVRSKAIIAQIEGYPERELVSALTNLDIGVQESQLAALAPGEYYWYQLIGMSVINSKGDLFGKVVEIMPTGSNDVLVVEGEKRHLIPYLPGQFVINIDESQQVITVDWDMNF.

The PRC barrel domain maps to 97–169 (PGEYYWYQLI…VITVDWDMNF (73 aa)).

This sequence belongs to the RimM family. Binds ribosomal protein uS19.

It is found in the cytoplasm. Its function is as follows. An accessory protein needed during the final step in the assembly of 30S ribosomal subunit, possibly for assembly of the head region. Essential for efficient processing of 16S rRNA. May be needed both before and after RbfA during the maturation of 16S rRNA. It has affinity for free ribosomal 30S subunits but not for 70S ribosomes. This is Ribosome maturation factor RimM from Legionella pneumophila (strain Paris).